Consider the following 1141-residue polypeptide: Isoleucine--tRNA ligase (1141 aa).

The short motif at proline 50–histidine 60 is the 'HIGH' region element. The short motif at lysine 689 to arginine 693 is the 'KMSKS' region element. Position 692 (lysine 692) interacts with ATP.

The protein belongs to the class-I aminoacyl-tRNA synthetase family. IleS type 2 subfamily. As to quaternary structure, monomer. Requires Zn(2+) as cofactor.

It is found in the cytoplasm. The enzyme catalyses tRNA(Ile) + L-isoleucine + ATP = L-isoleucyl-tRNA(Ile) + AMP + diphosphate. In terms of biological role, catalyzes the attachment of isoleucine to tRNA(Ile). As IleRS can inadvertently accommodate and process structurally similar amino acids such as valine, to avoid such errors it has two additional distinct tRNA(Ile)-dependent editing activities. One activity is designated as 'pretransfer' editing and involves the hydrolysis of activated Val-AMP. The other activity is designated 'posttransfer' editing and involves deacylation of mischarged Val-tRNA(Ile). This Bacteroides fragilis (strain ATCC 25285 / DSM 2151 / CCUG 4856 / JCM 11019 / LMG 10263 / NCTC 9343 / Onslow / VPI 2553 / EN-2) protein is Isoleucine--tRNA ligase.